A 222-amino-acid chain; its full sequence is Deoxyribose-phosphate aldolase (222 aa).

Asp-91 functions as the Proton donor/acceptor in the catalytic mechanism. Residue Lys-153 is the Schiff-base intermediate with acetaldehyde of the active site. Lys-182 (proton donor/acceptor) is an active-site residue.

This sequence belongs to the DeoC/FbaB aldolase family. DeoC type 1 subfamily.

The protein localises to the cytoplasm. The catalysed reaction is 2-deoxy-D-ribose 5-phosphate = D-glyceraldehyde 3-phosphate + acetaldehyde. Its pathway is carbohydrate degradation; 2-deoxy-D-ribose 1-phosphate degradation; D-glyceraldehyde 3-phosphate and acetaldehyde from 2-deoxy-alpha-D-ribose 1-phosphate: step 2/2. Its function is as follows. Catalyzes a reversible aldol reaction between acetaldehyde and D-glyceraldehyde 3-phosphate to generate 2-deoxy-D-ribose 5-phosphate. This Mycoplasma capricolum subsp. capricolum (strain California kid / ATCC 27343 / NCTC 10154) protein is Deoxyribose-phosphate aldolase.